The primary structure comprises 270 residues: MEDQMANLRLTDFEFFRIILPGSSKTKLKLPYKFARELGDRELREARLRVAGEGRRPWDVKVFDDDVSGDVYLGRGWQEFARAHDLRDGHFLVFRYDGAAAFTVTVFDETMCRRDYRRHHDAAESGSSSSSDSSDAAAAVATAAAEGVGDVALSQFAVTLRQCNLEDKQAQYLNVPMEFQEAHEYARREKVVLRMRGEAWTVRLKHSRRERGQRTAFRYGWHRFCVDNGLAVGDTCFFRVLREGDLRRGGAADDHVLKVAVRKADGTTLE.

2 consecutive DNA-binding regions (TF-B3) follow at residues 13–110 (FEFF…FDET) and 158–265 (VTLR…RKAD).

It is found in the nucleus. This Oryza sativa subsp. japonica (Rice) protein is B3 domain-containing protein Os03g0212300.